We begin with the raw amino-acid sequence, 342 residues long: uncharacterized protein (342 aa).

Transmembrane regions (helical) follow at residues 35–55, 134–154, and 161–180; these read YFRV…WCFS, LLFL…IIYF, and LFIT…YCFS. 2 disordered regions span residues 198-220 and 311-342; these read SSDN…QQYN and IINN…NYTN.

It is found in the membrane. This is an uncharacterized protein from Dictyostelium discoideum (Social amoeba).